We begin with the raw amino-acid sequence, 305 residues long: Porphobilinogen deaminase (305 aa).

Cys241 is modified (S-(dipyrrolylmethanemethyl)cysteine).

The protein belongs to the HMBS family. Monomer. The cofactor is dipyrromethane.

The enzyme catalyses 4 porphobilinogen + H2O = hydroxymethylbilane + 4 NH4(+). It functions in the pathway porphyrin-containing compound metabolism; protoporphyrin-IX biosynthesis; coproporphyrinogen-III from 5-aminolevulinate: step 2/4. Functionally, tetrapolymerization of the monopyrrole PBG into the hydroxymethylbilane pre-uroporphyrinogen in several discrete steps. This Exiguobacterium sp. (strain ATCC BAA-1283 / AT1b) protein is Porphobilinogen deaminase.